Reading from the N-terminus, the 94-residue chain is Small ribosomal subunit protein bS18 (94 aa).

Belongs to the bacterial ribosomal protein bS18 family. Part of the 30S ribosomal subunit. Forms a tight heterodimer with protein bS6.

Functionally, binds as a heterodimer with protein bS6 to the central domain of the 16S rRNA, where it helps stabilize the platform of the 30S subunit. This chain is Small ribosomal subunit protein bS18, found in Rickettsia bellii (strain OSU 85-389).